We begin with the raw amino-acid sequence, 414 residues long: Transforming growth factor beta-2 proprotein (414 aa).

A signal peptide spans 1-20; the sequence is MHYCVLSAFLLLHLVTVALS. N72, N140, and N241 each carry an N-linked (GlcNAc...) asparagine glycan. Cystine bridges form between C309-C318, C317-C380, C346-C411, and C350-C413.

The protein belongs to the TGF-beta family. In terms of assembly, interacts with the serine proteases, HTRA1 and HTRA3. Interacts with ASPN. Interacts with MFAP5. As to quaternary structure, interacts with Transforming growth factor beta-2 (TGF-beta-2) chain; interaction is non-covalent and maintains (TGF-beta-2) in a latent state. Interacts with LRRC32/GARP; leading to regulate activation of TGF-beta-2. Interacts with NREP; the interaction results in a decrease in TGFB2 autoinduction. Transforming growth factor beta-2: Homodimer; disulfide-linked. Transforming growth factor beta-2: Interacts with TGF-beta receptors (TGFBR1 and TGFBR2), leading to signal transduction. The precursor proprotein is cleaved in the Golgi apparatus to form Transforming growth factor beta-2 (TGF-beta-2) and Latency-associated peptide (LAP) chains, which remain non-covalently linked, rendering TGF-beta-2 inactive.

The protein resides in the secreted. It localises to the extracellular space. It is found in the extracellular matrix. Functionally, precursor of the Latency-associated peptide (LAP) and Transforming growth factor beta-2 (TGF-beta-2) chains, which constitute the regulatory and active subunit of TGF-beta-2, respectively. Its function is as follows. Required to maintain the Transforming growth factor beta-2 (TGF-beta-2) chain in a latent state during storage in extracellular matrix. Associates non-covalently with TGF-beta-2 and regulates its activation via interaction with 'milieu molecules', such as LTBP1 and LRRC32/GARP, that control activation of TGF-beta-2. In terms of biological role, multifunctional protein that regulates various processes such as angiogenesis and heart development. Activation into mature form follows different steps: following cleavage of the proprotein in the Golgi apparatus, Latency-associated peptide (LAP) and Transforming growth factor beta-2 (TGF-beta-2) chains remain non-covalently linked rendering TGF-beta-2 inactive during storage in extracellular matrix. At the same time, LAP chain interacts with 'milieu molecules', such as LTBP1 and LRRC32/GARP, that control activation of TGF-beta-2 and maintain it in a latent state during storage in extracellular milieus. Once activated following release of LAP, TGF-beta-2 acts by binding to TGF-beta receptors (TGFBR1 and TGFBR2), which transduce signal. The polypeptide is Transforming growth factor beta-2 proprotein (TGFB2) (Bos taurus (Bovine)).